Reading from the N-terminus, the 101-residue chain is Large ribosomal subunit protein eL36 (101 aa).

Disordered stretches follow at residues 1 to 31 (MGEI…GFLS) and 75 to 101 (GTHM…SKGE).

It belongs to the eukaryotic ribosomal protein eL36 family.

This chain is Large ribosomal subunit protein eL36 (RL36), found in Ulva compressa (Green alga).